Consider the following 203-residue polypeptide: Superoxide dismutase [Mn] (203 aa).

Mn(2+) is bound by residues histidine 27, histidine 81, aspartate 167, and histidine 171.

This sequence belongs to the iron/manganese superoxide dismutase family. Homodimer. Mn(2+) is required as a cofactor.

The catalysed reaction is 2 superoxide + 2 H(+) = H2O2 + O2. Its function is as follows. Destroys superoxide anion radicals which are normally produced within the cells and which are toxic to biological systems. The sequence is that of Superoxide dismutase [Mn] (sodA) from Buchnera aphidicola subsp. Acyrthosiphon pisum (strain APS) (Acyrthosiphon pisum symbiotic bacterium).